The chain runs to 384 residues: Iron(3+)-hydroxamate import system permease protein FhuB (384 aa).

9 consecutive transmembrane segments (helical) span residues 58-78 (GAVI…FLSI), 115-135 (TAAA…MQGM), 154-174 (FAVS…LVLW), 176-196 (FAGA…SRGG), 202-222 (LALA…AIAI), 243-263 (WSGV…AFFI), 296-316 (VILT…GLII), 330-350 (WIIP…DIAA), and 357-377 (FETP…FYLA).

This sequence belongs to the binding-protein-dependent transport system permease family. FecCD subfamily. In terms of assembly, the complex is composed of an ATP-binding protein (FhuC), two transmembrane proteins (FhuB and FhuG) and a solute-binding protein (FhuD or YxeB).

The protein localises to the cell membrane. The protein resides in the membrane raft. Part of the ABC transporter complex FhuBGCD involved in iron(3+)-hydroxamate import. Responsible for the translocation of the substrate across the membrane. This Bacillus subtilis (strain 168) protein is Iron(3+)-hydroxamate import system permease protein FhuB (fhuB).